The chain runs to 479 residues: PRAME family member 19 (479 aa).

Residues 15-38 form an LRR 1 repeat; that stretch reads QSLLRDQALAISVLDELPRELFPR. Residues 97 to 124 form an LRR 1; degenerate repeat; it reads RWKLQVLEMRDVDENFWTIWSGARPLSC. Residues 179-203 form an LRR 2; degenerate repeat; the sequence is HLCCTKVVNYSMNILNFRNILETVY. The stretch at 204-230 is one LRR 3; degenerate repeat; the sequence is PDSIQVLEIWNMCWPCMVAEVSRYLSQ. The LRR 4; degenerate repeat unit spans residues 231–265; it reads MKNLRKLFISDGCGYLPSFESQGQLVAEFSSVFLR. 5 LRR repeats span residues 266 to 291, 292 to 323, 324 to 342, 348 to 375, and 376 to 400; these read LEYL…IRCL, KSPL…SQLK, QLNL…PLRA, AATL…ALSR, and CSNL…LLRH.

This sequence belongs to the PRAME family.

In Homo sapiens (Human), this protein is PRAME family member 19.